Here is a 406-residue protein sequence, read N- to C-terminus: NADH-quinone oxidoreductase subunit D (406 aa).

Belongs to the complex I 49 kDa subunit family. In terms of assembly, NDH-1 is composed of 14 different subunits. Subunits NuoB, C, D, E, F, and G constitute the peripheral sector of the complex.

The protein localises to the cell inner membrane. The catalysed reaction is a quinone + NADH + 5 H(+)(in) = a quinol + NAD(+) + 4 H(+)(out). Its function is as follows. NDH-1 shuttles electrons from NADH, via FMN and iron-sulfur (Fe-S) centers, to quinones in the respiratory chain. The immediate electron acceptor for the enzyme in this species is believed to be ubiquinone. Couples the redox reaction to proton translocation (for every two electrons transferred, four hydrogen ions are translocated across the cytoplasmic membrane), and thus conserves the redox energy in a proton gradient. The polypeptide is NADH-quinone oxidoreductase subunit D (Acidiphilium cryptum (strain JF-5)).